The primary structure comprises 414 residues: Serine--tRNA ligase (414 aa).

Position 230 to 232 (230 to 232 (TSE)) interacts with L-serine. Residue 261 to 263 (RQE) participates in ATP binding. Residue Glu-284 coordinates L-serine. 348 to 351 (EISS) contributes to the ATP binding site. L-serine is bound at residue Ser-382.

It belongs to the class-II aminoacyl-tRNA synthetase family. Type-1 seryl-tRNA synthetase subfamily. As to quaternary structure, homodimer. The tRNA molecule binds across the dimer.

It localises to the cytoplasm. The catalysed reaction is tRNA(Ser) + L-serine + ATP = L-seryl-tRNA(Ser) + AMP + diphosphate + H(+). It carries out the reaction tRNA(Sec) + L-serine + ATP = L-seryl-tRNA(Sec) + AMP + diphosphate + H(+). It participates in aminoacyl-tRNA biosynthesis; selenocysteinyl-tRNA(Sec) biosynthesis; L-seryl-tRNA(Sec) from L-serine and tRNA(Sec): step 1/1. In terms of biological role, catalyzes the attachment of serine to tRNA(Ser). Is also able to aminoacylate tRNA(Sec) with serine, to form the misacylated tRNA L-seryl-tRNA(Sec), which will be further converted into selenocysteinyl-tRNA(Sec). This is Serine--tRNA ligase from Campylobacter concisus (strain 13826).